Consider the following 88-residue polypeptide: Small ribosomal subunit protein bS20 (88 aa).

It belongs to the bacterial ribosomal protein bS20 family.

In terms of biological role, binds directly to 16S ribosomal RNA. In Clostridium botulinum (strain ATCC 19397 / Type A), this protein is Small ribosomal subunit protein bS20.